The primary structure comprises 303 residues: Sulfotransferase 6B1 (303 aa).

3'-phosphoadenylyl sulfate is bound at residue 65–70; sequence KCGSNW. Catalysis depends on H118, which acts as the Proton acceptor. Residues R140, S148, Y203, 237–242, and 259–261 each bind 3'-phosphoadenylyl sulfate; these read STFQAM and RKG.

This sequence belongs to the sulfotransferase 1 family. Specifically expressed in kidney and testis.

Its subcellular location is the cytoplasm. It is found in the cytosol. It catalyses the reaction thyroxine + 3'-phosphoadenylyl sulfate = thyroxine sulfate + adenosine 3',5'-bisphosphate + H(+). Sulfotransferase that utilizes 3'-phospho-5'-adenylyl sulfate (PAPS) as sulfonate donor to catalyze the sulfate conjugation of thyroxine. Involved in the metabolism of thyroxine. The chain is Sulfotransferase 6B1 (SULT6B1) from Homo sapiens (Human).